A 494-amino-acid polypeptide reads, in one-letter code: Ketol-acid reductoisomerase (NADP(+)) (494 aa).

In terms of domain architecture, KARI N-terminal Rossmann spans 14-208 (LDQIGRCRFM…GGDRAGVLES (195 aa)). NADP(+) contacts are provided by residues 45–48 (CGAQ), Arg-68, Arg-76, Ser-78, and 108–110 (DKQ). Residue His-132 is part of the active site. Gly-158 lines the NADP(+) pocket. KARI C-terminal knotted domains lie at 209 to 344 (SFVA…NAPE) and 345 to 487 (YNGK…MTDM). Mg(2+)-binding residues include Asp-217, Glu-221, Glu-389, and Glu-393. Ser-414 contacts substrate.

The protein belongs to the ketol-acid reductoisomerase family. It depends on Mg(2+) as a cofactor.

It catalyses the reaction (2R)-2,3-dihydroxy-3-methylbutanoate + NADP(+) = (2S)-2-acetolactate + NADPH + H(+). It carries out the reaction (2R,3R)-2,3-dihydroxy-3-methylpentanoate + NADP(+) = (S)-2-ethyl-2-hydroxy-3-oxobutanoate + NADPH + H(+). Its pathway is amino-acid biosynthesis; L-isoleucine biosynthesis; L-isoleucine from 2-oxobutanoate: step 2/4. The protein operates within amino-acid biosynthesis; L-valine biosynthesis; L-valine from pyruvate: step 2/4. Its function is as follows. Involved in the biosynthesis of branched-chain amino acids (BCAA). Catalyzes an alkyl-migration followed by a ketol-acid reduction of (S)-2-acetolactate (S2AL) to yield (R)-2,3-dihydroxy-isovalerate. In the isomerase reaction, S2AL is rearranged via a Mg-dependent methyl migration to produce 3-hydroxy-3-methyl-2-ketobutyrate (HMKB). In the reductase reaction, this 2-ketoacid undergoes a metal-dependent reduction by NADPH to yield (R)-2,3-dihydroxy-isovalerate. In Pseudoalteromonas atlantica (strain T6c / ATCC BAA-1087), this protein is Ketol-acid reductoisomerase (NADP(+)).